We begin with the raw amino-acid sequence, 129 residues long: D-ribose pyranase (129 aa).

Residue histidine 20 is the Proton donor of the active site. Substrate-binding positions include aspartate 28, histidine 96, and 118–120 (YAN).

The protein belongs to the RbsD / FucU family. RbsD subfamily. In terms of assembly, homodecamer.

Its subcellular location is the cytoplasm. It catalyses the reaction beta-D-ribopyranose = beta-D-ribofuranose. Its pathway is carbohydrate metabolism; D-ribose degradation; D-ribose 5-phosphate from beta-D-ribopyranose: step 1/2. In terms of biological role, catalyzes the interconversion of beta-pyran and beta-furan forms of D-ribose. This is D-ribose pyranase from Exiguobacterium sp. (strain ATCC BAA-1283 / AT1b).